We begin with the raw amino-acid sequence, 260 residues long: UPF0246 protein Bamb_2261 (260 aa).

This sequence belongs to the UPF0246 family.

The sequence is that of UPF0246 protein Bamb_2261 from Burkholderia ambifaria (strain ATCC BAA-244 / DSM 16087 / CCUG 44356 / LMG 19182 / AMMD) (Burkholderia cepacia (strain AMMD)).